Consider the following 140-residue polypeptide: Probable NADH dehydrogenase [ubiquinone] iron-sulfur protein 6, mitochondrial (140 aa).

This sequence belongs to the complex I NDUFS6 subunit family. In terms of assembly, complex I is composed of 45 different subunits. This is a component of the iron-sulfur (IP) fragment of the enzyme.

The protein resides in the mitochondrion inner membrane. Functionally, accessory subunit of the mitochondrial membrane respiratory chain NADH dehydrogenase (Complex I), that is believed not to be involved in catalysis. Complex I functions in the transfer of electrons from NADH to the respiratory chain. The immediate electron acceptor for the enzyme is believed to be ubiquinone. The protein is Probable NADH dehydrogenase [ubiquinone] iron-sulfur protein 6, mitochondrial (nduf-6) of Caenorhabditis elegans.